We begin with the raw amino-acid sequence, 366 residues long: uncharacterized protein (366 aa).

A disordered region spans residues 199-267 (QKKQIEDEEK…QLKDAQAKRD (69 aa)).

This is an uncharacterized protein from Haemophilus influenzae (strain ATCC 51907 / DSM 11121 / KW20 / Rd).